The following is a 576-amino-acid chain: POU domain, class 6, transcription factor 1 (576 aa).

The segment at 65-88 is disordered; that stretch reads PAEAGSCDPDHSAEATVAARSPSE. In terms of domain architecture, POU-specific spans 414–488; sequence EDGINLEEIR…VLEKWLMEAE (75 aa). The homeobox DNA-binding region spans 509–568; that stretch reads KRKRRTSFTPQAIEALNAYFEKNPLPTGQEITEIAKELNYDREVVRVWFCNRRQTLKNTS.

Belongs to the POU transcription factor family. Class-6 subfamily. In terms of tissue distribution, isoform C1 and isoform C2 are found in the brain, while isoform C7 is found in the testis.

It localises to the nucleus. Its function is as follows. Transcription factor that binds preferentially to a variant of the octamer motif (5'-ATGATAAT-3'). This Mus musculus (Mouse) protein is POU domain, class 6, transcription factor 1 (Pou6f1).